The following is a 166-amino-acid chain: Ribonuclease H (166 aa).

The 143-residue stretch at 5–147 (PRKRVALFTD…VDREARRQAQ (143 aa)) folds into the RNase H type-1 domain. Mg(2+) is bound by residues D14, E52, D74, and D139. Positions 128–166 (GHTGHPENERVDREARRQAQSQAKTPCPPQAPTLFHEEA) are disordered. Basic and acidic residues predominate over residues 131-144 (GHPENERVDREARR).

This sequence belongs to the RNase H family. As to quaternary structure, monomer. Mg(2+) serves as cofactor.

It is found in the cytoplasm. The catalysed reaction is Endonucleolytic cleavage to 5'-phosphomonoester.. In terms of biological role, endonuclease that specifically degrades the RNA of RNA-DNA hybrids. This Thermus thermophilus (strain ATCC BAA-163 / DSM 7039 / HB27) protein is Ribonuclease H.